The following is a 262-amino-acid chain: Polyamine aminopropyltransferase (262 aa).

The PABS domain maps to 1 to 249 (MWITQEITPY…DIHRAAFALP (249 aa)). Residue asparagine 29 coordinates S-methyl-5'-thioadenosine. Aspartate 83 is a spermidine binding site. Aspartate 155 (proton acceptor) is an active-site residue.

Homodimer.

It is found in the cytoplasm. The catalysed reaction is S-adenosyl 3-(methylsulfanyl)propylamine + putrescine = S-methyl-5'-thioadenosine + spermidine + H(+). It functions in the pathway amine and polyamine biosynthesis; spermidine biosynthesis; spermidine from putrescine: step 1/1. Inhibited by methylglyoxal bis(cyclopentylamidinohydrazone)(MGBCP). Involved in the cell growth and proliferation. Catalyzes the irreversible transfer of a propylamine group from the amino donor S-adenosylmethioninamine (decarboxy-AdoMet) to putrescine (1,4-diaminobutane) to yield spermidine. Spermidine cannot be used as an aminopropyl acceptor. The sequence is that of Polyamine aminopropyltransferase from Helicobacter pylori (strain ATCC 700392 / 26695) (Campylobacter pylori).